Consider the following 2415-residue polypeptide: Spectrin alpha chain, erythrocytic 1 (2415 aa).

Spectrin repeat units follow at residues 52–152, 157–259, 263–365, 370–471, 475–576, 580–681, 686–787, 792–894, and 898–967; these read YHYQ…SDVL, KFYQ…ESLS, DLQR…AKLK, YHRF…HQYR, DFHL…RKLL, QLLQ…GTQL, QLLQ…KKKL, KLQQ…NDLK, and QLQQ…QQQQ. Phosphoserine is present on Ser257. An SH3 domain is found at 975 to 1034; it reads GREARVIALYDFEARSRREVSMKKNDVLTLLSSINKDWWKVEADDHQGFVPAVYVRKLAP. Ser990 carries the phosphoserine modification. 11 Spectrin repeats span residues 1085 to 1177, 1183 to 1285, 1287 to 1390, 1394 to 1489, 1499 to 1603, 1606 to 1709, 1712 to 1815, 1818 to 1921, 1924 to 2029, 2040 to 2142, and 2154 to 2254; these read LAYE…YQLL, VEMF…SLNE, HKFF…KMLD, ELQL…QLLT, DLKQ…KLNE, RQQR…KLKE, ALFQ…NLEE, EYLQ…SQLD, HAFQ…KLLE, LFME…QELQ, and MCQE…NLEQ. The residue at position 1972 (Ser1972) is a Phosphoserine. EF-hand domains follow at residues 2267–2302, 2310–2345, and 2347–2382; these read ETLK…LNYY, EPEP…KESE, and IKTS…EQVS. Asp2280, Asn2282, Thr2284, Arg2286, Glu2291, Asp2323, Tyr2329, and Asp2334 together coordinate Ca(2+).

Belongs to the spectrin family. As to quaternary structure, composed of non-homologous chains, alpha and beta, which aggregate to form dimers, tetramers, and higher polymers. Interacts with FASLG. Interacts with BCAM.

It is found in the cytoplasm. The protein localises to the cytoskeleton. The protein resides in the cell cortex. Spectrin is the major constituent of the cytoskeletal network underlying the erythrocyte plasma membrane. It associates with band 4.1 and actin to form the cytoskeletal superstructure of the erythrocyte plasma membrane. This chain is Spectrin alpha chain, erythrocytic 1 (Spta1), found in Mus musculus (Mouse).